A 570-amino-acid polypeptide reads, in one-letter code: Dual specificity testis-specific protein kinase 2 (570 aa).

A Protein kinase domain is found at 58-313; that stretch reads DFTREKIGSG…EIGKTLEEIM (256 aa). Residues 64 to 72 and Lys-87 contribute to the ATP site; that span reads IGSGFFSEV. Asp-176 functions as the Proton acceptor in the catalytic mechanism. Residue Ser-219 is modified to Phosphoserine; by autocatalysis. Phosphoserine is present on residues Ser-369, Ser-456, and Ser-460. The disordered stretch occupies residues 513 to 570; that stretch reads DCSNPQEENGFVPRPKGTSPCSGAASEEMEVEEERPRRAPVHFSISGISLQTQGEQDG. Positions 558–570 are enriched in polar residues; that stretch reads SGISLQTQGEQDG.

Belongs to the protein kinase superfamily. TKL Ser/Thr protein kinase family. It depends on Mg(2+) as a cofactor. The cofactor is Mn(2+). Predominantly expressed in testis and prostate. Found predominantly in non-germinal Sertoli cells.

Its subcellular location is the nucleus. The catalysed reaction is L-seryl-[protein] + ATP = O-phospho-L-seryl-[protein] + ADP + H(+). It catalyses the reaction L-threonyl-[protein] + ATP = O-phospho-L-threonyl-[protein] + ADP + H(+). It carries out the reaction L-tyrosyl-[protein] + ATP = O-phospho-L-tyrosyl-[protein] + ADP + H(+). Its activity is regulated as follows. Activated by autophosphorylation on Ser-219. Dual specificity protein kinase activity catalyzing autophosphorylation and phosphorylation of exogenous substrates on both serine/threonine and tyrosine residues. Phosphorylates cofilin at 'Ser-3'. May play an important role in spermatogenesis. In Rattus norvegicus (Rat), this protein is Dual specificity testis-specific protein kinase 2 (Tesk2).